The following is a 341-amino-acid chain: N-acetyl-gamma-glutamyl-phosphate reductase (341 aa).

Residue Cys-147 is part of the active site.

It belongs to the NAGSA dehydrogenase family. Type 1 subfamily.

It is found in the cytoplasm. It catalyses the reaction N-acetyl-L-glutamate 5-semialdehyde + phosphate + NADP(+) = N-acetyl-L-glutamyl 5-phosphate + NADPH + H(+). Its pathway is amino-acid biosynthesis; L-arginine biosynthesis; N(2)-acetyl-L-ornithine from L-glutamate: step 3/4. Functionally, catalyzes the NADPH-dependent reduction of N-acetyl-5-glutamyl phosphate to yield N-acetyl-L-glutamate 5-semialdehyde. The chain is N-acetyl-gamma-glutamyl-phosphate reductase from Dehalococcoides mccartyi (strain CBDB1).